The chain runs to 428 residues: MAFLALGINHKTASVDVRERVAFTPEQLVEALQQLCRLTDSREAAILSTCNRSELYIEQDQLSADIVLRWLADYHHLSLDELRASAYVHEDDAAVRHMMRVASGLDSLVLGEPQILGQMKSAYAVAREAGTIGPLLGRLFQATFNAAKQVRTDTAIGENPVSVAFAAVSLAKQIFSDLQRSQALLIGAGETITLVARHLHELGVKRIVVANRTLERASLLAEQFGAHAVLLSDIPAELVRSDIVISSTASQLPILGKGAVESALKLRKHKPIFMVDIAVPRDIEPEVGELDDVYLYSVDDLHEVVAENLKSRQGAAQAAEEMVSVGADDFMVRLRELAAVDVLKAYRQQSERLRDEELQKALRLLANGGNAEDVLGQLARGLTNKLLHAPSVQLKKLSAEGRLDALAMAQELFALEGSPDSFSDKKPQ.

Residues threonine 49–arginine 52, serine 107, glutamate 112–glutamine 114, and glutamine 118 each bind substrate. Cysteine 50 serves as the catalytic Nucleophile. Glycine 187–isoleucine 192 provides a ligand contact to NADP(+).

The protein belongs to the glutamyl-tRNA reductase family. In terms of assembly, homodimer.

The catalysed reaction is (S)-4-amino-5-oxopentanoate + tRNA(Glu) + NADP(+) = L-glutamyl-tRNA(Glu) + NADPH + H(+). It participates in porphyrin-containing compound metabolism; protoporphyrin-IX biosynthesis; 5-aminolevulinate from L-glutamyl-tRNA(Glu): step 1/2. Its function is as follows. Catalyzes the NADPH-dependent reduction of glutamyl-tRNA(Glu) to glutamate 1-semialdehyde (GSA). The chain is Glutamyl-tRNA reductase from Pseudomonas fluorescens (strain Pf0-1).